A 266-amino-acid polypeptide reads, in one-letter code: Undecaprenyl-diphosphatase (266 aa).

A run of 8 helical transmembrane segments spans residues 1–21 (MDTLQVIILALIQGLTEFLPI), 39–59 (QGLSFDVAVHIGSLAAVVIYF), 83–103 (SKLAWWIILATIPAIGVGFTA), 111–131 (LRGPGVIAITTVIFGLLLWFA), 149–169 (ALLIGVAQALALIPGTSRSGI), 183–203 (AAARFSFLMSIPVILGAALLM), 218–238 (ALALGSILSFIAAYACIYFFL), and 246–266 (MTPFVIYRIALGVFLCGFIYL).

The protein belongs to the UppP family.

It localises to the cell inner membrane. It catalyses the reaction di-trans,octa-cis-undecaprenyl diphosphate + H2O = di-trans,octa-cis-undecaprenyl phosphate + phosphate + H(+). In terms of biological role, catalyzes the dephosphorylation of undecaprenyl diphosphate (UPP). Confers resistance to bacitracin. This chain is Undecaprenyl-diphosphatase, found in Shewanella amazonensis (strain ATCC BAA-1098 / SB2B).